Consider the following 435-residue polypeptide: 5-methylthioadenosine/S-adenosylhomocysteine deaminase (435 aa).

H65 and H67 together coordinate Zn(2+). Substrate-binding residues include E94, R150, and H189. H216 contacts Zn(2+). Positions 219 and 304 each coordinate substrate. D304 is a binding site for Zn(2+).

This sequence belongs to the metallo-dependent hydrolases superfamily. MTA/SAH deaminase family. Zn(2+) serves as cofactor.

The catalysed reaction is S-adenosyl-L-homocysteine + H2O + H(+) = S-inosyl-L-homocysteine + NH4(+). It catalyses the reaction S-methyl-5'-thioadenosine + H2O + H(+) = S-methyl-5'-thioinosine + NH4(+). In terms of biological role, catalyzes the deamination of 5-methylthioadenosine and S-adenosyl-L-homocysteine into 5-methylthioinosine and S-inosyl-L-homocysteine, respectively. Is also able to deaminate adenosine. The protein is 5-methylthioadenosine/S-adenosylhomocysteine deaminase of Bacillus cytotoxicus (strain DSM 22905 / CIP 110041 / 391-98 / NVH 391-98).